Reading from the N-terminus, the 285-residue chain is Probable endonuclease 4 (285 aa).

Zn(2+) contacts are provided by His-69, His-109, Glu-145, Asp-179, His-182, His-216, Asp-229, His-231, and Glu-261.

The protein belongs to the AP endonuclease 2 family. Zn(2+) serves as cofactor.

It carries out the reaction Endonucleolytic cleavage to 5'-phosphooligonucleotide end-products.. Its function is as follows. Endonuclease IV plays a role in DNA repair. It cleaves phosphodiester bonds at apurinic or apyrimidinic (AP) sites, generating a 3'-hydroxyl group and a 5'-terminal sugar phosphate. This Shigella dysenteriae serotype 1 (strain Sd197) protein is Probable endonuclease 4.